The primary structure comprises 221 residues: Endonuclease V (221 aa).

Mg(2+) is bound by residues aspartate 43 and aspartate 109.

Belongs to the endonuclease V family. Mg(2+) is required as a cofactor.

It is found in the cytoplasm. The catalysed reaction is Endonucleolytic cleavage at apurinic or apyrimidinic sites to products with a 5'-phosphate.. In terms of biological role, DNA repair enzyme involved in the repair of deaminated bases. Selectively cleaves double-stranded DNA at the second phosphodiester bond 3' to a deoxyinosine leaving behind the intact lesion on the nicked DNA. This is Endonuclease V from Petrotoga mobilis (strain DSM 10674 / SJ95).